Consider the following 150-residue polypeptide: C-type natriuretic peptide (150 aa).

An N-terminal signal peptide occupies residues 1–31 (MSISSSSSSSSSSSSCLLLISLMLLAASCQG). Positions 32-127 (RPDLQHRNHK…RKMFRGRTKK (96 aa)) are excised as a propeptide. Low complexity predominate over residues 60 to 73 (GAADGSSGEEAALS). A disordered region spans residues 60–109 (GAADGSSGEEAALSQRAPPSIRALHPRSGRLGLRDDLEAEPPAENKPRRR). An intrachain disulfide couples Cys-134 to Cys-150.

Belongs to the natriuretic peptide family. In terms of tissue distribution, expressed in brain, but not in atrium or ventricle.

Its subcellular location is the secreted. Functionally, hormone which plays a role in endochondral ossification through regulation of cartilaginous growth plate chondrocytes proliferation and differentiation. May also be vasoactive and natriuretic. In Acipenser transmontanus (White sturgeon), this protein is C-type natriuretic peptide (cnp).